The chain runs to 161 residues: Nucleotide-binding protein BceJ2315_27070 (161 aa).

The protein belongs to the YajQ family.

Nucleotide-binding protein. This chain is Nucleotide-binding protein BceJ2315_27070, found in Burkholderia cenocepacia (strain ATCC BAA-245 / DSM 16553 / LMG 16656 / NCTC 13227 / J2315 / CF5610) (Burkholderia cepacia (strain J2315)).